The following is a 206-amino-acid chain: Holliday junction branch migration complex subunit RuvA (206 aa).

Positions 1–64 (MIGRLRGNLL…EDAQLLYGFN (64 aa)) are domain I. A domain II region spans residues 65 to 143 (TKKERALFRE…GWGAGDLFTP (79 aa)). The interval 144–157 (ADTTSMDDASDLIS) is flexible linker. The interval 158-206 (SPQSAQDEAVSALISLGYKPVQASKMVSQVAKPDMTSESLIRESLKSMI) is domain III.

This sequence belongs to the RuvA family. As to quaternary structure, homotetramer. Forms an RuvA(8)-RuvB(12)-Holliday junction (HJ) complex. HJ DNA is sandwiched between 2 RuvA tetramers; dsDNA enters through RuvA and exits via RuvB. An RuvB hexamer assembles on each DNA strand where it exits the tetramer. Each RuvB hexamer is contacted by two RuvA subunits (via domain III) on 2 adjacent RuvB subunits; this complex drives branch migration. In the full resolvosome a probable DNA-RuvA(4)-RuvB(12)-RuvC(2) complex forms which resolves the HJ.

The protein resides in the cytoplasm. Functionally, the RuvA-RuvB-RuvC complex processes Holliday junction (HJ) DNA during genetic recombination and DNA repair, while the RuvA-RuvB complex plays an important role in the rescue of blocked DNA replication forks via replication fork reversal (RFR). RuvA specifically binds to HJ cruciform DNA, conferring on it an open structure. The RuvB hexamer acts as an ATP-dependent pump, pulling dsDNA into and through the RuvAB complex. HJ branch migration allows RuvC to scan DNA until it finds its consensus sequence, where it cleaves and resolves the cruciform DNA. This chain is Holliday junction branch migration complex subunit RuvA, found in Aliivibrio salmonicida (strain LFI1238) (Vibrio salmonicida (strain LFI1238)).